Here is a 92-residue protein sequence, read N- to C-terminus: Large ribosomal subunit protein eL31 (92 aa).

This sequence belongs to the eukaryotic ribosomal protein eL31 family.

This Pyrobaculum arsenaticum (strain DSM 13514 / JCM 11321 / PZ6) protein is Large ribosomal subunit protein eL31.